The sequence spans 320 residues: Phosphoribosylaminoimidazole-succinocarboxamide synthase (320 aa).

The tract at residues 283-303 (ESDWDRNSPPPPLPESIAHQT) is disordered.

It belongs to the SAICAR synthetase family.

It catalyses the reaction 5-amino-1-(5-phospho-D-ribosyl)imidazole-4-carboxylate + L-aspartate + ATP = (2S)-2-[5-amino-1-(5-phospho-beta-D-ribosyl)imidazole-4-carboxamido]succinate + ADP + phosphate + 2 H(+). Its pathway is purine metabolism; IMP biosynthesis via de novo pathway; 5-amino-1-(5-phospho-D-ribosyl)imidazole-4-carboxamide from 5-amino-1-(5-phospho-D-ribosyl)imidazole-4-carboxylate: step 1/2. The sequence is that of Phosphoribosylaminoimidazole-succinocarboxamide synthase from Rhodopirellula baltica (strain DSM 10527 / NCIMB 13988 / SH1).